A 150-amino-acid polypeptide reads, in one-letter code: uncharacterized protein (150 aa).

The HTH asnC-type domain maps to 5–66 (LDKVDRRLLE…KPNYKKLNLG (62 aa)). Positions 24–43 (IATLSKKLGIPRTTVHYRIK) form a DNA-binding region, H-T-H motif.

This is an uncharacterized protein from Pyrococcus horikoshii (strain ATCC 700860 / DSM 12428 / JCM 9974 / NBRC 100139 / OT-3).